The chain runs to 338 residues: tRNA N6-adenosine threonylcarbamoyltransferase (338 aa).

Positions 111 and 115 each coordinate Fe cation. Residues 134–138, aspartate 167, glycine 180, and asparagine 272 contribute to the substrate site; that span reads LVSGG. Position 300 (aspartate 300) interacts with Fe cation.

This sequence belongs to the KAE1 / TsaD family. Requires Fe(2+) as cofactor.

Its subcellular location is the cytoplasm. The catalysed reaction is L-threonylcarbamoyladenylate + adenosine(37) in tRNA = N(6)-L-threonylcarbamoyladenosine(37) in tRNA + AMP + H(+). In terms of biological role, required for the formation of a threonylcarbamoyl group on adenosine at position 37 (t(6)A37) in tRNAs that read codons beginning with adenine. Is involved in the transfer of the threonylcarbamoyl moiety of threonylcarbamoyl-AMP (TC-AMP) to the N6 group of A37, together with TsaE and TsaB. TsaD likely plays a direct catalytic role in this reaction. The chain is tRNA N6-adenosine threonylcarbamoyltransferase from Nitrosomonas eutropha (strain DSM 101675 / C91 / Nm57).